We begin with the raw amino-acid sequence, 489 residues long: uncharacterized protein (489 aa).

A 2Fe-2S ferredoxin-type domain is found at 2–84 (IKITVKRFNG…GMIIEPLRGF (83 aa)). [2Fe-2S] cluster is bound by residues C48, C53, C56, and C68. 4Fe-4S ferredoxin-type domains are found at residues 123–155 (KYVE…YPGP) and 177–205 (TAYF…IVHR). The [4Fe-4S] cluster site is built by C134, C137, C140, C144, C186, C189, C192, and C196.

The protein belongs to the succinate dehydrogenase/fumarate reductase iron-sulfur protein family.

This is an uncharacterized protein from Methanocaldococcus jannaschii (strain ATCC 43067 / DSM 2661 / JAL-1 / JCM 10045 / NBRC 100440) (Methanococcus jannaschii).